A 309-amino-acid chain; its full sequence is Ribonuclease Z (309 aa).

Positions 63, 65, 67, 68, 145, 216, and 274 each coordinate Zn(2+). Aspartate 67 acts as the Proton acceptor in catalysis.

It belongs to the RNase Z family. As to quaternary structure, homodimer. It depends on Zn(2+) as a cofactor.

It carries out the reaction Endonucleolytic cleavage of RNA, removing extra 3' nucleotides from tRNA precursor, generating 3' termini of tRNAs. A 3'-hydroxy group is left at the tRNA terminus and a 5'-phosphoryl group is left at the trailer molecule.. In terms of biological role, zinc phosphodiesterase, which displays some tRNA 3'-processing endonuclease activity. Probably involved in tRNA maturation, by removing a 3'-trailer from precursor tRNA. This Streptococcus suis (strain 98HAH33) protein is Ribonuclease Z.